Reading from the N-terminus, the 240-residue chain is Transcriptional regulatory protein rxt2 (240 aa).

Belongs to the RXT2 family. As to quaternary structure, component of the RPD3C(L) complex.

The protein localises to the nucleus. Component of the RPD3C(L) histone deacetylase complex (HDAC) responsible for the deacetylation of lysine residues on the N-terminal part of the core histones (H2A, H2B, H3 and H4). Histone deacetylation gives a tag for epigenetic repression and plays an important role in transcriptional regulation, cell cycle progression and developmental events. The chain is Transcriptional regulatory protein rxt2 (rtx2) from Schizosaccharomyces pombe (strain 972 / ATCC 24843) (Fission yeast).